The primary structure comprises 488 residues: MEPQIVKFVFKEEMTCQCPKMSDSACDVDTDQNYFEEEVRLASFANFSSSYPVSAPALARAGFYYTGDGDRVKCFSCMAMVEDWQHGDTAIGKHRKISPNCKFINGFNNFRSDCIQTQAPVMQNSHANGFPNSAEDPGEKSSSEIMADYMLRTGRVVDMSKPKYPRHMAMCSEEARLQTFQNWPGYSPLMPKELANAGLFYTGINDQVKCFCCGGKLMNWEPSDRAWTEHKKHFPECYFVLGRDVGNVTRDASVQGSTYMNSYNARLETFSSWPFPIDKETLAKAGFYRIGDEDATKCFSCGGMLNCWAANDDPWEEHAKAYPGCQFLIEEKGQQFINNAQLQRPILHKANSGEASPALPKDTSFLKNPLVIYAQQMGFPLEEIKKVMGQKLKTTGNNYTCVEEFVSDLLCAQSETIADKPMKREISIEEKLRQLEEEKVCKVCMDRRITIVFIPCGHLVACAVCADVLDKCPICCTIIERRQKIFMS.

BIR repeat units lie at residues 40-105, 176-241, and 266-329; these read RLAS…KFIN, RLQT…YFVL, and RLET…QFLI. 4 residues coordinate Zn(2+): cysteine 298, cysteine 301, histidine 318, and cysteine 325. The RING-type zinc-finger motif lies at 441–476; it reads CKVCMDRRITIVFIPCGHLVACAVCADVLDKCPICC.

This sequence belongs to the IAP family. In terms of assembly, monomer, and homodimer. In terms of processing, degraded in a 2-step mechanism; a caspase-independent first step and a caspase-dependent second step. Stabilized indirectly by MAPK, which acts to delay caspase activation, rather than directly phosphorylating xiap.

The protein resides in the cytoplasm. It is found in the nucleus. The catalysed reaction is S-ubiquitinyl-[E2 ubiquitin-conjugating enzyme]-L-cysteine + [acceptor protein]-L-lysine = [E2 ubiquitin-conjugating enzyme]-L-cysteine + N(6)-ubiquitinyl-[acceptor protein]-L-lysine.. Multi-functional protein which regulates not only caspases and apoptosis, but also acts as an E3 ubiquitin-protein ligase mediating ubiquitination and subsequent proteasomal degradation of its target proteins. Acts as a direct caspase inhibitor. E3 ubiquitin-protein ligase that acts as an important regulator of innate immunity by mediating 'Lys-63'-linked polyubiquitination of ripk2 downstream of NOD1 and NOD2, thereby transforming ripk2 into a scaffolding protein for downstream effectors, ultimately leading to activation of the NF-kappa-B and MAP kinases signaling. A key apoptotic suppressor in eggs. Acts as a positive regulator of Wnt signaling. In Xenopus laevis (African clawed frog), this protein is E3 ubiquitin-protein ligase XIAP (xiap).